Reading from the N-terminus, the 628-residue chain is tRNA uridine 5-carboxymethylaminomethyl modification enzyme MnmG 1 (628 aa).

Residue 11 to 16 (GAGHAG) coordinates FAD. Residue 280-294 (GPRHCPSIDRKVLNF) coordinates NAD(+).

It belongs to the MnmG family. Homodimer. Heterotetramer of two MnmE and two MnmG subunits. Requires FAD as cofactor.

It is found in the cytoplasm. Functionally, NAD-binding protein involved in the addition of a carboxymethylaminomethyl (cmnm) group at the wobble position (U34) of certain tRNAs, forming tRNA-cmnm(5)s(2)U34. In Fusobacterium nucleatum subsp. nucleatum (strain ATCC 25586 / DSM 15643 / BCRC 10681 / CIP 101130 / JCM 8532 / KCTC 2640 / LMG 13131 / VPI 4355), this protein is tRNA uridine 5-carboxymethylaminomethyl modification enzyme MnmG 1.